The chain runs to 272 residues: Hydroxyethylthiazole kinase (272 aa).

Met62 is a binding site for substrate. Positions 138 and 183 each coordinate ATP. Gly210 is a substrate binding site.

This sequence belongs to the Thz kinase family. Requires Mg(2+) as cofactor.

The enzyme catalyses 5-(2-hydroxyethyl)-4-methylthiazole + ATP = 4-methyl-5-(2-phosphooxyethyl)-thiazole + ADP + H(+). It participates in cofactor biosynthesis; thiamine diphosphate biosynthesis; 4-methyl-5-(2-phosphoethyl)-thiazole from 5-(2-hydroxyethyl)-4-methylthiazole: step 1/1. Its function is as follows. Catalyzes the phosphorylation of the hydroxyl group of 4-methyl-5-beta-hydroxyethylthiazole (THZ). The protein is Hydroxyethylthiazole kinase of Dichelobacter nodosus (strain VCS1703A).